Here is a 396-residue protein sequence, read N- to C-terminus: GTPase Obg (396 aa).

The region spanning 1–159 (MKFVDEATIY…RNIRLELKVL (159 aa)) is the Obg domain. The OBG-type G domain occupies 160 to 333 (ADVGLLGLPN…LCQDIMTWIE (174 aa)). Residues 166–173 (GLPNAGKS), 191–195 (FTTLV), 213–216 (DIPG), 283–286 (NKTD), and 314–316 (SAL) each bind GTP. Residues Ser173 and Thr193 each coordinate Mg(2+). Disordered stretches follow at residues 337-356 (EEER…REQM) and 373-396 (LARK…FYAP). Positions 347 to 356 (EADRLNREQM) are enriched in basic and acidic residues. The segment covering 381-396 (SDDDDDDEDVEVFYAP) has biased composition (acidic residues).

Belongs to the TRAFAC class OBG-HflX-like GTPase superfamily. OBG GTPase family. As to quaternary structure, monomer. Requires Mg(2+) as cofactor.

It localises to the cytoplasm. Functionally, an essential GTPase which binds GTP, GDP and possibly (p)ppGpp with moderate affinity, with high nucleotide exchange rates and a fairly low GTP hydrolysis rate. Plays a role in control of the cell cycle, stress response, ribosome biogenesis and in those bacteria that undergo differentiation, in morphogenesis control. This chain is GTPase Obg, found in Hahella chejuensis (strain KCTC 2396).